The following is an 89-amino-acid chain: UPF0335 protein CCNA_03428 (89 aa).

The protein belongs to the UPF0335 family.

The chain is UPF0335 protein CCNA_03428 from Caulobacter vibrioides (strain NA1000 / CB15N) (Caulobacter crescentus).